The primary structure comprises 91 residues: Acylphosphatase (91 aa).

The Acylphosphatase-like domain occupies 3 to 91 (TVTMRVTGLV…EKFTRFSVVY (89 aa)). Active-site residues include R18 and N36.

The protein belongs to the acylphosphatase family.

It catalyses the reaction an acyl phosphate + H2O = a carboxylate + phosphate + H(+). This is Acylphosphatase (acyP) from Lactobacillus johnsonii (strain CNCM I-12250 / La1 / NCC 533).